The following is a 277-amino-acid chain: MVAPSGAMSDSESSSSDSSDAEELARCREAATPAWGLEQRPREAERPAAGTADTQAPAPQPSRRREVNQHDEDGNELQTTPEFRAYVAKKLGALLDSSIAIAEVWKKTQQARLQQEAKEQQEAKEQQAAKEEQAAKKEEDGFRLFFTSVPGGHEKEASPRPCRKRQPPSSSEDSDEELQRCREAAVSASDILQESAIHCPAKVEKEAEKKKLKKKAKKKADADLAAATGLEQVKEAGSVNGDPVLSGTKKKKKKKAKKAREASLCPPAECAAAEPKN.

Disordered regions lie at residues 1 to 81, 108 to 182, and 238 to 277; these read MVAP…QTTP, TQQA…QRCR, and SVNG…EPKN. The segment covering 9–18 has biased composition (low complexity); it reads SDSESSSSDS. Ser62 carries the post-translational modification Phosphoserine. The span at 63 to 72 shows a compositional bias: basic and acidic residues; that stretch reads RRREVNQHDE. Thr80 is subject to Phosphothreonine. Residues 106-141 adopt a coiled-coil conformation; the sequence is KKTQQARLQQEAKEQQEAKEQQAAKEEQAAKKEEDG. Residues 115-142 show a composition bias toward basic and acidic residues; that stretch reads QEAKEQQEAKEQQAAKEEQAAKKEEDGF. Phosphoserine occurs at positions 158 and 238. Basic residues predominate over residues 248–258; the sequence is TKKKKKKKAKK. The short motif at 249–256 is the Nucleolar localization signal (NLS) element; the sequence is KKKKKKKA. The segment covering 265–277 has biased composition (low complexity); sequence CPPAECAAAEPKN.

It belongs to the CUSTOS family.

Its subcellular location is the nucleus envelope. Its function is as follows. Plays a role in the regulation of Wnt signaling pathway during early development. This chain is Protein CUSTOS, found in Rattus norvegicus (Rat).